The chain runs to 234 residues: MSSSSSSRIHNGEDVYEKAEEYWSRASQDVNGMLGGFEALHAPDISASKRFIEGLKKKNLFGYFDYALDCGAGIGRVTKHLLMPFFSKVDMEDVVEELITKSDQYIGKHPRIGDKFVEGLQTFAPPERRYDLIWIQWVSGHLVDEDLVDFFKRCAKGLKPGGCIVLKDNVTNHEKRLFDDDDHSWTRTEPELLKAFADSQLDMVSKALQTGFPKEIYPVKMYALKPQHTGFTNN.

S-adenosyl-L-methionine contacts are provided by residues G71, R76, 93-95, 120-121, and Q136; these read DVV and LQ.

It belongs to the methyltransferase superfamily. NTM1 family. Expressed in uterine cells and PVT neurons of the tail. Expressed in pharynx, intestine and DVB tail neuron.

It catalyses the reaction N-terminal L-alanyl-L-prolyl-L-lysyl-[protein] + 3 S-adenosyl-L-methionine = N-terminal N,N,N-trimethyl-L-alanyl-L-prolyl-L-lysyl-[protein] + 3 S-adenosyl-L-homocysteine + 3 H(+). The enzyme catalyses N-terminal L-seryl-L-prolyl-L-lysyl-[protein] + 3 S-adenosyl-L-methionine = N-terminal N,N,N-trimethyl-L-seryl-L-prolyl-L-lysyl-[protein] + 3 S-adenosyl-L-homocysteine + 3 H(+). It carries out the reaction N-terminal L-prolyl-L-prolyl-L-lysyl-[protein] + 2 S-adenosyl-L-methionine = N-terminal N,N-dimethyl-L-prolyl-L-prolyl-L-lysyl-[protein] + 2 S-adenosyl-L-homocysteine + 2 H(+). Functionally, alpha-N-methyltransferase that methylates the N-terminus of target proteins containing the N-terminal motif [Ala/Pro/Ser]-Pro-Lys when the initiator Met is cleaved. Specifically catalyzes mono-, di- or tri-methylation of exposed alpha-amino group of Ala or Ser residue in the [Ala/Ser]-Pro-Lys motif and mono- or di-methylation of Pro in the Pro-Pro-Lys motif. Probably required for the synthesis of neurotransmitter melatonin from serotonin, which plays a role in promoting a sleep-like state, called lethargus, during larval development. The protein is Alpha N-terminal protein methyltransferase 1 of Caenorhabditis elegans.